The primary structure comprises 120 residues: Chaperonin GroEL (120 aa).

23 to 27 (DGTTT) lines the ATP pocket.

Belongs to the chaperonin (HSP60) family. As to quaternary structure, forms a cylinder of 14 subunits composed of two heptameric rings stacked back-to-back. Interacts with the co-chaperonin GroES.

It is found in the cytoplasm. It catalyses the reaction ATP + H2O + a folded polypeptide = ADP + phosphate + an unfolded polypeptide.. Together with its co-chaperonin GroES, plays an essential role in assisting protein folding. The GroEL-GroES system forms a nano-cage that allows encapsulation of the non-native substrate proteins and provides a physical environment optimized to promote and accelerate protein folding. This chain is Chaperonin GroEL, found in Mycobacterium kansasii.